Reading from the N-terminus, the 100-residue chain is Small ribosomal subunit protein uS14c (100 aa).

Belongs to the universal ribosomal protein uS14 family. In terms of assembly, part of the 30S ribosomal subunit.

The protein resides in the plastid. The protein localises to the chloroplast. In terms of biological role, binds 16S rRNA, required for the assembly of 30S particles. The protein is Small ribosomal subunit protein uS14c of Oltmannsiellopsis viridis (Marine flagellate).